The chain runs to 541 residues: Formimidoyltransferase-cyclodeaminase (541 aa).

Residues 1–181 (MAKLVECVPN…GATVTGARTF (181 aa)) are formiminotransferase N-subdomain. Residue H82 is the For formimidoyltransferase activity of the active site. Folate is bound at residue 163 to 172 (GPPAFVPQWG). Residues 182-326 (LIAYNINLLC…PRERIIEYLV (145 aa)) are formiminotransferase C-subdomain. The tract at residues 327–334 (QAGQEDKG) is linker. The segment at 335–541 (LVTKPLGAFV…VLALLEKREA (207 aa)) is cyclodeaminase/cyclohydrolase. The For cyclodeaminase activity role is filled by D412.

It in the C-terminal section; belongs to the cyclodeaminase/cyclohydrolase family. In the N-terminal section; belongs to the formiminotransferase family. Homooctamer, including four polyglutamate binding sites. The subunits are arranged as a tetramer of dimers, and form a planar ring-shaped structure.

The protein resides in the cytoplasm. It is found in the cytosol. The protein localises to the golgi apparatus. Its subcellular location is the cytoskeleton. It localises to the microtubule organizing center. The protein resides in the centrosome. It is found in the centriole. It carries out the reaction 5-formimidoyltetrahydrofolate + L-glutamate = N-formimidoyl-L-glutamate + (6S)-5,6,7,8-tetrahydrofolate. The catalysed reaction is 5-formimidoyltetrahydrofolate + 2 H(+) = (6R)-5,10-methenyltetrahydrofolate + NH4(+). It functions in the pathway amino-acid degradation; L-histidine degradation into L-glutamate; L-glutamate from N-formimidoyl-L-glutamate (transferase route): step 1/1. Functionally, folate-dependent enzyme, that displays both transferase and deaminase activity. Serves to channel one-carbon units from formiminoglutamate to the folate pool. Binds and promotes bundling of vimentin filaments originating from the Golgi. The sequence is that of Formimidoyltransferase-cyclodeaminase (FTCD) from Gallus gallus (Chicken).